The following is a 689-amino-acid chain: DNA topoisomerase 1 (689 aa).

A Toprim domain is found at 3 to 113 (DNLVIVESPA…KENRVVFNEI (111 aa)). Mg(2+) contacts are provided by E9 and D82. Residues 129 to 557 (EMNLVDAQQA…FFSSFKQDVE (429 aa)) form the Topo IA-type catalytic domain. Residues 163–168 (SAGRVQ) are interaction with DNA. Y298 (O-(5'-phospho-DNA)-tyrosine intermediate) is an active-site residue. The segment at 328–357 (SKRKASGKQGDQDAHEAIRPSSTMRTPDDM) is disordered. 3 consecutive C4-type zinc fingers follow at residues 577–603 (CEVCGSPMVIKMGRYGKFMACSNFPDC), 617–645 (CPKCNDGDVVERKSKKNRVFYGCSKYPEC), and 658–681 (CPKCNQYLVENKKGKTTQVICSNC).

Belongs to the type IA topoisomerase family. In terms of assembly, monomer. Requires Mg(2+) as cofactor.

It catalyses the reaction ATP-independent breakage of single-stranded DNA, followed by passage and rejoining.. Its function is as follows. Releases the supercoiling and torsional tension of DNA, which is introduced during the DNA replication and transcription, by transiently cleaving and rejoining one strand of the DNA duplex. Introduces a single-strand break via transesterification at a target site in duplex DNA. The scissile phosphodiester is attacked by the catalytic tyrosine of the enzyme, resulting in the formation of a DNA-(5'-phosphotyrosyl)-enzyme intermediate and the expulsion of a 3'-OH DNA strand. The free DNA strand then undergoes passage around the unbroken strand, thus removing DNA supercoils. Finally, in the religation step, the DNA 3'-OH attacks the covalent intermediate to expel the active-site tyrosine and restore the DNA phosphodiester backbone. This is DNA topoisomerase 1 from Staphylococcus aureus (strain bovine RF122 / ET3-1).